The sequence spans 179 residues: Sodium/potassium-transporting ATPase subunit beta-1-interacting protein 3 (179 aa).

A run of 4 helical transmembrane segments spans residues 5-22, 35-55, 62-82, and 151-171; these read TGRCTLVFICTLQMLVAL, APILGNFLHIIVVILGLFGTI, IVAYTIWTAFWVAWNVFIICF, and AVQILLSLIGFVYACYVISVI.

The protein belongs to the NKAIN family. As to quaternary structure, interacts with atp1b1 C-terminus.

The protein localises to the cell membrane. This is Sodium/potassium-transporting ATPase subunit beta-1-interacting protein 3 (nkain3) from Xenopus laevis (African clawed frog).